We begin with the raw amino-acid sequence, 566 residues long: Liver carboxylesterase 1 (566 aa).

Residues 1–18 (MWLRALVLATLAAFTAWG) form the signal peptide. The N-linked (GlcNAc...) asparagine glycan is linked to asparagine 79. Cysteine 87 and cysteine 116 form a disulfide bridge. Serine 221 (acyl-ester intermediate) is an active-site residue. The cysteines at positions 274 and 285 are disulfide-linked. Glutamate 354 functions as the Charge relay system in the catalytic mechanism. Serine 379 bears the Phosphoserine mark. Histidine 467 functions as the Charge relay system in the catalytic mechanism.

This sequence belongs to the type-B carboxylesterase/lipase family. Homotrimer and homohexamer. Binds to beta-glucuronidase.

The protein resides in the endoplasmic reticulum lumen. It localises to the cytoplasm. It is found in the lipid droplet. The enzyme catalyses a carboxylic ester + H2O = an alcohol + a carboxylate + H(+). It carries out the reaction cholesteryl (9Z-octadecenoate) + H2O = cholesterol + (9Z)-octadecenoate + H(+). The catalysed reaction is 2-(5Z,8Z,11Z,14Z-eicosatetraenoyl)-glycerol + H2O = glycerol + (5Z,8Z,11Z,14Z)-eicosatetraenoate + H(+). It catalyses the reaction prostaglandin E2 1-glyceryl ester + H2O = prostaglandin E2 + glycerol + H(+). The enzyme catalyses a cholesterol ester + H2O = cholesterol + a fatty acid + H(+). It carries out the reaction prostaglandin F2alpha 1-glyceryl ester + H2O = prostaglandin F2alpha + glycerol + H(+). Functionally, involved in the detoxification of xenobiotics and in the activation of ester and amide prodrugs. Hydrolyzes aromatic and aliphatic esters, but has no catalytic activity toward amides or a fatty acyl-CoA ester. Displays fatty acid ethyl ester synthase activity, catalyzing the ethyl esterification of oleic acid to ethyloleate. Converts monoacylglycerides to free fatty acids and glycerol. Hydrolyzes of 2-arachidonoylglycerol and prostaglandins. Hydrolyzes cellular cholesteryl esters to free cholesterols and promotes reverse cholesterol transport (RCT) by facilitating both the initial and final steps in the process. First of all, allows free cholesterol efflux from macrophages to extracellular cholesterol acceptors and secondly, releases free cholesterol from lipoprotein-delivered cholesteryl esters in the liver for bile acid synthesis or direct secretion into the bile. This is Liver carboxylesterase 1 from Macaca fascicularis (Crab-eating macaque).